Here is a 158-residue protein sequence, read N- to C-terminus: Transcription elongation factor GreA (158 aa).

A coiled-coil region spans residues 49 to 69 (SEYESAKDEQAFVEGRISQIE). The interval 102-125 (EEPESYTIVGESESDPLSGKISNE) is disordered.

The protein belongs to the GreA/GreB family.

Necessary for efficient RNA polymerase transcription elongation past template-encoded arresting sites. The arresting sites in DNA have the property of trapping a certain fraction of elongating RNA polymerases that pass through, resulting in locked ternary complexes. Cleavage of the nascent transcript by cleavage factors such as GreA or GreB allows the resumption of elongation from the new 3'terminus. GreA releases sequences of 2 to 3 nucleotides. This is Transcription elongation factor GreA from Limosilactobacillus fermentum (strain NBRC 3956 / LMG 18251) (Lactobacillus fermentum).